The sequence spans 600 residues: MTKEIILGIDLGTTNSCVAVIENKKPIVLENPEGKRTVPSVVSFNGDEVLVGDAAKRKQITNPNTVSSIKRLMGTKEKVTILNKEYTPEEISAKILSYIKDYAEKKLGTKINKAVITVPAYFDDAQRQATKNAGIIAGLTVERIINEPTAAALAYGIDKLDKEQKILVFDLGGGTFDVSVLDMADGTFEVLSTSGDNHLGGDDWDQVIINWLLKSIADEFNIDLSKNKMAMQRLKDAAEKAKIELSGVNTTTISLPFIAMDSSGQPINFEKELNRATFDNLTKNLIERLKKPVLDAMKESKLSLADIDQVLMVGGSTRMPAVQNLVKELTGKEPNHSLNPDEVVAIGAAIQGGVLAGEIDDILLLDVTPLTLSIETMGGVATPLIPRNTKIPVSKSQVFSTAADNQPSVDIRIVQGERSLAADNKLLGNFELSGIEPAPRGVPQIEIKFNIDANGIMSVNAKDLKTQKETSITIKDSQGLSQEEIDKMIKEAEENKEKDAKVKHERELVNRADSLINQLEQVVKTENVPQEQKDAFNKQIEELTNARDAQDYTKLEAEVKKVEDLLANAAKFAQQTQQQDPNNQKDDVTEATVTDDSTKK.

Thr175 carries the phosphothreonine; by autocatalysis modification. The tract at residues 572–600 (FAQQTQQQDPNNQKDDVTEATVTDDSTKK) is disordered. A compositionally biased stretch (polar residues) spans 591–600 (ATVTDDSTKK).

It belongs to the heat shock protein 70 family.

Acts as a chaperone. In Ureaplasma urealyticum serovar 10 (strain ATCC 33699 / Western), this protein is Chaperone protein DnaK.